Here is a 279-residue protein sequence, read N- to C-terminus: Diaminopimelate epimerase (279 aa).

Residues Asn12, Gln45, and Asn65 each contribute to the substrate site. The active-site Proton donor is the Cys74. Residues 75 to 76 (GN), Asn162, Asn195, and 213 to 214 (ER) contribute to the substrate site. Cys222 (proton acceptor) is an active-site residue. Residue 223–224 (GT) coordinates substrate.

Belongs to the diaminopimelate epimerase family. Homodimer.

It is found in the cytoplasm. It carries out the reaction (2S,6S)-2,6-diaminopimelate = meso-2,6-diaminopimelate. The protein operates within amino-acid biosynthesis; L-lysine biosynthesis via DAP pathway; DL-2,6-diaminopimelate from LL-2,6-diaminopimelate: step 1/1. Functionally, catalyzes the stereoinversion of LL-2,6-diaminopimelate (L,L-DAP) to meso-diaminopimelate (meso-DAP), a precursor of L-lysine and an essential component of the bacterial peptidoglycan. The polypeptide is Diaminopimelate epimerase (Shewanella woodyi (strain ATCC 51908 / MS32)).